The primary structure comprises 21 residues: Snake venom serine protease jerdonase (21 aa).

The 21-residue stretch at I1–A21 folds into the Peptidase S1 domain.

The protein belongs to the peptidase S1 family. Snake venom subfamily. Monomer. Post-translationally, glycosylated; contains 35.8% neutral carbohydrate. Expressed by the venom gland.

The protein resides in the secreted. Inhibited by PMSF and soybean trypsin inhibitor. Partially inhibited by L-cysteine and DTT. Not affected by EDTA. In terms of biological role, multifunctional venom serine protease that has fibrino(geno)lytic activity towards the A alpha-chain of human fibrinogen (FGA) and a slow activity towards the B beta-chain (FGB). Also hydrolyzes bovine low-molecular-mass kininogen and releases bradykinin. Catalyzes the hydrolysis of BAEE, S-2238 and S-2302. This Protobothrops jerdonii (Jerdon's pitviper) protein is Snake venom serine protease jerdonase.